The chain runs to 460 residues: V-type ATP synthase beta chain 2 (460 aa).

The protein belongs to the ATPase alpha/beta chains family.

Produces ATP from ADP in the presence of a proton gradient across the membrane. The V-type beta chain is a regulatory subunit. The chain is V-type ATP synthase beta chain 2 from Clostridium tetani (strain Massachusetts / E88).